A 725-amino-acid polypeptide reads, in one-letter code: Eukaryotic translation initiation factor 3 subunit B (725 aa).

At Ser23 the chain carries Phosphoserine. One can recognise an RRM domain in the interval 39 to 129; the sequence is TVVVIEGAPV…HTFVVRKLNQ (91 aa). Ser135 is modified (phosphoserine). Thr136 is subject to Phosphothreonine. WD repeat units lie at residues 190-229, 304-344, and 347-386; these read DREN…MCAR, DGKK…LVDK, and IKID…QPAR. The stretch at 630-671 forms a coiled coil; the sequence is LTKEDMKKIRKKLKDYNRLFDEEDIAEQSSANRELAARRRQL.

This sequence belongs to the eIF-3 subunit B family. In terms of assembly, component of the eukaryotic translation initiation factor 3 (eIF-3) complex. The eIF-3 complex appears to include tif32/eif3a, SPAC25G10.08/eif3b, tif33/eif3c, SPBC4C3.07/eif3f, tif35/eif3g and sum1/eif3i. This set of common subunits may also associate exclusively with either moe1/eif3d and int6/eif3e, or with SPAC821.05/eif3h and SPAC1751.03/eif3m. The eIF-3 complex may also include SPAC3A12.13c/eif3j.

Its subcellular location is the cytoplasm. In terms of biological role, RNA-binding component of the eukaryotic translation initiation factor 3 (eIF-3) complex, which is involved in protein synthesis of a specialized repertoire of mRNAs and, together with other initiation factors, stimulates binding of mRNA and methionyl-tRNAi to the 40S ribosome. The eIF-3 complex specifically targets and initiates translation of a subset of mRNAs involved in cell proliferation. The sequence is that of Eukaryotic translation initiation factor 3 subunit B from Schizosaccharomyces pombe (strain 972 / ATCC 24843) (Fission yeast).